The sequence spans 470 residues: Light-independent protochlorophyllide reductase subunit N (470 aa).

[4Fe-4S] cluster-binding residues include C23, C48, and C108.

This sequence belongs to the BchN/ChlN family. Protochlorophyllide reductase is composed of three subunits; ChlL, ChlN and ChlB. Forms a heterotetramer of two ChlB and two ChlN subunits. [4Fe-4S] cluster is required as a cofactor.

It is found in the plastid. The protein localises to the chloroplast. It carries out the reaction chlorophyllide a + oxidized 2[4Fe-4S]-[ferredoxin] + 2 ADP + 2 phosphate = protochlorophyllide a + reduced 2[4Fe-4S]-[ferredoxin] + 2 ATP + 2 H2O. Its pathway is porphyrin-containing compound metabolism; chlorophyll biosynthesis (light-independent). In terms of biological role, component of the dark-operative protochlorophyllide reductase (DPOR) that uses Mg-ATP and reduced ferredoxin to reduce ring D of protochlorophyllide (Pchlide) to form chlorophyllide a (Chlide). This reaction is light-independent. The NB-protein (ChlN-ChlB) is the catalytic component of the complex. This chain is Light-independent protochlorophyllide reductase subunit N, found in Zygnema circumcarinatum (Green alga).